We begin with the raw amino-acid sequence, 547 residues long: Glucose-6-phosphate isomerase (547 aa).

Catalysis depends on Glu-350, which acts as the Proton donor. Residues His-381 and Lys-510 contribute to the active site.

It belongs to the GPI family.

It localises to the cytoplasm. It carries out the reaction alpha-D-glucose 6-phosphate = beta-D-fructose 6-phosphate. The protein operates within carbohydrate biosynthesis; gluconeogenesis. It functions in the pathway carbohydrate degradation; glycolysis; D-glyceraldehyde 3-phosphate and glycerone phosphate from D-glucose: step 2/4. Catalyzes the reversible isomerization of glucose-6-phosphate to fructose-6-phosphate. This chain is Glucose-6-phosphate isomerase, found in Mesorhizobium japonicum (strain LMG 29417 / CECT 9101 / MAFF 303099) (Mesorhizobium loti (strain MAFF 303099)).